Consider the following 366-residue polypeptide: Galactoside alpha-(1,2)-fucosyltransferase 1 (366 aa).

The Cytoplasmic portion of the chain corresponds to 1-8 (MWPLSHRH). The chain crosses the membrane as a helical; Signal-anchor for type II membrane protein span at residues 9-25 (LCLAFLLVCVLSAISFF). Residues 26–366 (LHVHQDSFRH…LSPLWTLAEP (341 aa)) are Lumenal-facing. Asn-66, Asn-302, and Asn-328 each carry an N-linked (GlcNAc...) asparagine glycan.

Belongs to the glycosyltransferase 11 family.

It is found in the golgi apparatus. The protein localises to the golgi stack membrane. It carries out the reaction a beta-D-galactosyl-(1-&gt;4)-N-acetyl-beta-D-glucosaminyl derivative + GDP-beta-L-fucose = an alpha-L-Fuc-(1-&gt;2)-beta-D-Gal-(1-&gt;4)-beta-D-GlcNAc derivative + GDP + H(+). It catalyses the reaction a ganglioside GA1 + GDP-beta-L-fucose = a ganglioside Fuc-GA1 + GDP + H(+). The catalysed reaction is a beta-D-Gal-(1-&gt;3)-beta-D-GlcNAc-(1-&gt;3)-beta-D-Gal-(1-&gt;4)-beta-D-Glc-(1&lt;-&gt;1')-Cer(d18:1(4E)) + GDP-beta-L-fucose = alpha-L-fucosyl-(1-&gt;2)- beta-D-galactosyl-(1-&gt;3)-N-acetyl-beta-D-glucosaminyl-(1-&gt;3)-beta-D-galactosyl-(1-&gt;4)-beta-D-glucosyl-(1&lt;-&gt;1')-N-acylsphing-4-enine + GDP + H(+). The enzyme catalyses a neolactoside nLc4Cer(d18:1(4E)) + GDP-beta-L-fucose = a neolactoside IV(2)-alpha-Fuc-nLc4Cer(d18:1(4E)) + GDP + H(+). It carries out the reaction a ganglioside GM1 + GDP-beta-L-fucose = a ganglioside Fuc-GM1 + GDP + H(+). It catalyses the reaction beta-D-galactosyl-(1-&gt;3)-N-acetyl-D-galactosamine + GDP-beta-L-fucose = alpha-L-fucosyl-(1-&gt;2)-beta-D-galactosyl-(1-&gt;3)-N-acetyl-D-galactosamine + GDP + H(+). It functions in the pathway protein modification; protein glycosylation. Functionally, catalyzes the transfer of L-fucose, from a guanosine diphosphate-beta-L-fucose, to the terminal galactose residue of glycoconjugates through an alpha(1,2) linkage leading to H antigen synthesis that is an intermediate substrate in the synthesis of ABO blood group antigens. H antigen is essential for maturation of the glomerular layer of the main olfactory bulb, in cell migration and early cell-cell contacts during tumor associated angiogenesis. Preferentially fucosylates soluble lactose and to a lesser extent fucosylates glycolipids gangliosides GA1 and GM1a. The polypeptide is Galactoside alpha-(1,2)-fucosyltransferase 1 (Alouatta caraya (Black howler monkey)).